Consider the following 385-residue polypeptide: 1-deoxy-D-xylulose 5-phosphate reductoisomerase (385 aa).

NADPH is bound by residues S10, G11, S12, I13, G36, N38, and N124. K125 contributes to the 1-deoxy-D-xylulose 5-phosphate binding site. Position 126 (E126) interacts with NADPH. D150 serves as a coordination point for Mn(2+). 1-deoxy-D-xylulose 5-phosphate is bound by residues S151, E152, S176, and H198. Residue E152 coordinates Mn(2+). G204 contributes to the NADPH binding site. The 1-deoxy-D-xylulose 5-phosphate site is built by S211, N216, K217, and E220. Residue E220 coordinates Mn(2+).

Belongs to the DXR family. Mg(2+) is required as a cofactor. It depends on Mn(2+) as a cofactor.

The enzyme catalyses 2-C-methyl-D-erythritol 4-phosphate + NADP(+) = 1-deoxy-D-xylulose 5-phosphate + NADPH + H(+). It functions in the pathway isoprenoid biosynthesis; isopentenyl diphosphate biosynthesis via DXP pathway; isopentenyl diphosphate from 1-deoxy-D-xylulose 5-phosphate: step 1/6. Functionally, catalyzes the NADPH-dependent rearrangement and reduction of 1-deoxy-D-xylulose-5-phosphate (DXP) to 2-C-methyl-D-erythritol 4-phosphate (MEP). The chain is 1-deoxy-D-xylulose 5-phosphate reductoisomerase from Endomicrobium trichonymphae.